We begin with the raw amino-acid sequence, 155 residues long: UBA-like domain-containing protein 1 (155 aa).

Positions 81–155 (KASESFNSSS…KASAAMEAER (75 aa)) are disordered. Over residues 83 to 96 (SESFNSSSSPSMAT) the composition is skewed to low complexity. The span at 112-127 (ANQQSLWTQGPSAQQT) shows a compositional bias: polar residues. Positions 139–155 (QQAASEQKASAAMEAER) are enriched in low complexity.

The protein belongs to the UBALD family.

In Danio rerio (Zebrafish), this protein is UBA-like domain-containing protein 1 (ubald1).